We begin with the raw amino-acid sequence, 83 residues long: Large ribosomal subunit protein eL43 (83 aa).

Residues C38, C41, C56, and C59 each contribute to the Zn(2+) site. Residues 38 to 59 form a C4-type zinc finger; the sequence is CPVCGRRAVRRISTGIWQCKKC.

Belongs to the eukaryotic ribosomal protein eL43 family. Putative zinc-binding subfamily. As to quaternary structure, part of the 50S ribosomal subunit. It depends on Zn(2+) as a cofactor.

Functionally, binds to the 23S rRNA. The chain is Large ribosomal subunit protein eL43 from Pyrococcus abyssi (strain GE5 / Orsay).